A 66-amino-acid polypeptide reads, in one-letter code: Cold shock-like protein CspD (66 aa).

The region spanning 4–63 (GKVKWFNSEKGFGFIEVEGGDDVFVHFSAIQGDGFKTLEEGQEVSFEIVEGNRGPQAANV) is the CSD domain.

In terms of assembly, homodimer.

The protein resides in the cytoplasm. This is Cold shock-like protein CspD (cspD) from Bacillus anthracis.